Consider the following 421-residue polypeptide: MRAQNNLTVEVDCHSLGSNECPSMTSSFSPMDSPTPTPTSIYSQGSLASPGWQDAGSYPGHAYERHTGTTPMRSAFRLAGMTSNENMAMSYGAMEAQERMPMPDFLSAYDDNVEHFWLPSDAPKTYETGTHSLPYPHTLPQCPPMVRSNYRPHAAYLPEAATNPCLSRSIFHHAERVPQSMSMGNMMPWIPQASESIAPQTIAPSQVGPVTPPPSYSEFPTSIQTFKTHSPTTPLRSCSIGTASGPDTPISRMSGGAADYLEDFQQSPPFRDGLNRLQRHPSRKMIRKQSSRQNMSLENLPSIIKQVQFKCKEPGCKGRFKRQEHLKRHMKSHSKEKPHVCWVPGCERAFSRSDNLNAHYTKTHSKRGGRNRYVATLDESSPDYDPDFRGQLTPDGRPIRGSTLDDPMPDTREYSVDGLDD.

Over residues 228–242 the composition is skewed to polar residues; that stretch reads THSPTTPLRSCSIGT. The segment at 228-247 is disordered; that stretch reads THSPTTPLRSCSIGTASGPD. C2H2-type zinc fingers lie at residues 309-333 and 339-364; these read FKCK…MKSH and HVCW…TKTH. The segment covering 361-370 has biased composition (basic residues); that stretch reads TKTHSKRGGR. A disordered region spans residues 361–421; the sequence is TKTHSKRGGR…REYSVDGLDD (61 aa).

It is found in the nucleus. In terms of biological role, brlA, abaA and wetA are pivotal regulators of conidiophore development and conidium maturation. They act individually and together to regulate their own expression and that of numerous other sporulation-specific genes. Binds promoters of target genes at brlA response elements (BREs) containing the conserved sequence 5'-(C/A)(A/G)AGGG(G/A)-3'. This chain is C2H2 type master regulator of conidiophore development brlA, found in Aspergillus parasiticus (strain ATCC 56775 / NRRL 5862 / SRRC 143 / SU-1).